A 446-amino-acid chain; its full sequence is Minor teichoic acid biosynthesis protein GgaA (446 aa).

This sequence belongs to the glycosyltransferase 2 family.

The protein operates within cell wall biogenesis; poly(glucopyranosyl N-acetylgalactosamine 1-phosphate) teichoic acid biosynthesis. In terms of biological role, involved in the biosynthesis of galactosamine-containing minor teichoic acid, a non-essential cell wall polymer in B.subtilis 168. The protein is Minor teichoic acid biosynthesis protein GgaA (ggaA) of Bacillus subtilis (strain 168).